A 239-amino-acid polypeptide reads, in one-letter code: Uridylate kinase (239 aa).

Residue 12 to 15 (KLSG) coordinates ATP. Gly-53 is a binding site for UMP. Positions 54 and 58 each coordinate ATP. UMP-binding positions include Asp-73 and 135 to 142 (TGSPCFTT). The ATP site is built by Thr-162, Tyr-168, and Asp-171.

The protein belongs to the UMP kinase family. As to quaternary structure, homohexamer.

The protein localises to the cytoplasm. It catalyses the reaction UMP + ATP = UDP + ADP. The protein operates within pyrimidine metabolism; CTP biosynthesis via de novo pathway; UDP from UMP (UMPK route): step 1/1. With respect to regulation, inhibited by UTP. Its function is as follows. Catalyzes the reversible phosphorylation of UMP to UDP. The polypeptide is Uridylate kinase (Ruthia magnifica subsp. Calyptogena magnifica).